The sequence spans 343 residues: Cytoplasmic tRNA 2-thiolation protein 1 (343 aa).

It belongs to the TtcA family. CTU1/NCS6/ATPBD3 subfamily.

It is found in the cytoplasm. The protein operates within tRNA modification; 5-methoxycarbonylmethyl-2-thiouridine-tRNA biosynthesis. In terms of biological role, plays a central role in 2-thiolation of mcm(5)S(2)U at tRNA wobble positions of tRNA(Lys), tRNA(Glu) and tRNA(Gln). Directly binds tRNAs and probably acts by catalyzing adenylation of tRNAs, an intermediate required for 2-thiolation. It is unclear whether it acts as a sulfurtransferase that transfers sulfur from thiocarboxylated URM1 onto the uridine of tRNAs at wobble position. In Drosophila pseudoobscura pseudoobscura (Fruit fly), this protein is Cytoplasmic tRNA 2-thiolation protein 1.